The sequence spans 467 residues: Colanic acid biosynthesis protein WcaM (467 aa).

It functions in the pathway slime biogenesis; slime polysaccharide biosynthesis. This Salmonella typhimurium (strain LT2 / SGSC1412 / ATCC 700720) protein is Colanic acid biosynthesis protein WcaM (wcaM).